The chain runs to 200 residues: ATP synthase subunit s, mitochondrial (200 aa).

The transit peptide at 1-25 (MMMFGKISRQLCSLKKIPWSCDSRY) directs the protein to the mitochondrion. Residues 1–61 (MMMFGKISRQ…SEWLLRCGAK (61 aa)) are N-terminal domain. Residue Gly59 coordinates Mg(2+). 4 LRR repeats span residues 62 to 87 (VRYCGHQKWLHDYNTLPGSSIDRYKI), 88 to 116 (QAIDATDSCIMDIGLDHMVGLEHVEKITL), 117 to 141 (CKCHYIEDNCLQRLSQLENLRKSLL), and 142 to 173 (ELEIIACGNVTDNGVIALRHFRNLKYLFLSDL). A Mg(2+)-binding site is contributed by Thr93.

This sequence belongs to the ATP synthase subunit s family. Homotetramer. Associates with ATP synthase.

Its subcellular location is the mitochondrion. It is found in the mitochondrion inner membrane. Its function is as follows. Involved in regulation of mitochondrial membrane ATP synthase. Necessary for H(+) conduction of ATP synthase. Facilitates energy-driven catalysis of ATP synthesis by blocking a proton leak through an alternative proton exit pathway. The polypeptide is ATP synthase subunit s, mitochondrial (Dmac2l) (Mus musculus (Mouse)).